The sequence spans 199 residues: Probable GTP-binding protein EngB (199 aa).

An EngB-type G domain is found at 28–199 (DLPEIALAGR…ESWDTILEYL (172 aa)). Residues 36–43 (GRSNVGKS), 63–67 (GKTQL), 81–84 (DVPG), 148–151 (TKAD), and 180–182 (FSS) each bind GTP. Positions 43 and 65 each coordinate Mg(2+).

Belongs to the TRAFAC class TrmE-Era-EngA-EngB-Septin-like GTPase superfamily. EngB GTPase family. Mg(2+) is required as a cofactor.

Its function is as follows. Necessary for normal cell division and for the maintenance of normal septation. This chain is Probable GTP-binding protein EngB, found in Streptococcus equi subsp. zooepidemicus (strain H70).